We begin with the raw amino-acid sequence, 256 residues long: Myb family transcription factor MPH1 (256 aa).

The HTH myb-type domain occupies 14-74 (RSEVPRMRWT…HLQMYRSGSS (61 aa)). The H-T-H motif DNA-binding region spans 45–70 (PKRILQLMGVKGVSISHIKSHLQMYR).

In terms of tissue distribution, highly expressed in the pulvinus and stem nodes. Expressed in the plumule of germinating seeds, coleoptile, leaves, internodes, leave sheaths, spikes and roots.

The protein localises to the nucleus. Probable transcription factor involved in the regulation of plant height by elongating internode cell length. Involved in the positive regulation of grain yield. May be involved in the regulation of genes related to cell elongation and cell wall synthesis, which are associated with plant height and yield phenotypes. Plays a role in tolerance to cadmium stress. This chain is Myb family transcription factor MPH1, found in Oryza sativa subsp. japonica (Rice).